The chain runs to 493 residues: Ribose import ATP-binding protein RbsA (493 aa).

2 consecutive ABC transporter domains span residues 3–239 and 252–493; these read IKMK…VGRE and GRVV…TGGR. 35–42 is an ATP binding site; it reads GENGAGKS.

The protein belongs to the ABC transporter superfamily. Ribose importer (TC 3.A.1.2.1) family. The complex is composed of an ATP-binding protein (RbsA), two transmembrane proteins (RbsC) and a solute-binding protein (RbsB).

Its subcellular location is the cell membrane. It catalyses the reaction D-ribose(out) + ATP + H2O = D-ribose(in) + ADP + phosphate + H(+). In terms of biological role, part of the ABC transporter complex RbsABC involved in ribose import. Responsible for energy coupling to the transport system. The chain is Ribose import ATP-binding protein RbsA from Bacillus licheniformis (strain ATCC 14580 / DSM 13 / JCM 2505 / CCUG 7422 / NBRC 12200 / NCIMB 9375 / NCTC 10341 / NRRL NRS-1264 / Gibson 46).